We begin with the raw amino-acid sequence, 208 residues long: Harpin secretion protein HrpW (208 aa).

Helical transmembrane passes span 2 to 22, 46 to 66, 149 to 169, and 176 to 196; these read LALF…CTAF, ALYG…AHDI, IGFL…NLLL, and VSPM…VSGW.

This sequence belongs to the FliP/MopC/SpaP family.

It is found in the cell membrane. Its function is as follows. Required for the secretion of harpin. This chain is Harpin secretion protein HrpW (hrpW), found in Pseudomonas syringae pv. syringae.